A 331-amino-acid polypeptide reads, in one-letter code: tRNA N6-adenosine threonylcarbamoyltransferase (331 aa).

Histidine 107 and histidine 111 together coordinate Fe cation. Residues 129–133 (LVSGG), aspartate 162, glycine 175, and asparagine 269 contribute to the substrate site. Aspartate 297 contributes to the Fe cation binding site.

Belongs to the KAE1 / TsaD family. Requires Fe(2+) as cofactor.

It is found in the cytoplasm. It catalyses the reaction L-threonylcarbamoyladenylate + adenosine(37) in tRNA = N(6)-L-threonylcarbamoyladenosine(37) in tRNA + AMP + H(+). Functionally, required for the formation of a threonylcarbamoyl group on adenosine at position 37 (t(6)A37) in tRNAs that read codons beginning with adenine. Is involved in the transfer of the threonylcarbamoyl moiety of threonylcarbamoyl-AMP (TC-AMP) to the N6 group of A37, together with TsaE and TsaB. TsaD likely plays a direct catalytic role in this reaction. This Wolinella succinogenes (strain ATCC 29543 / DSM 1740 / CCUG 13145 / JCM 31913 / LMG 7466 / NCTC 11488 / FDC 602W) (Vibrio succinogenes) protein is tRNA N6-adenosine threonylcarbamoyltransferase.